We begin with the raw amino-acid sequence, 241 residues long: Uridylate kinase (241 aa).

15-18 (KMSG) contributes to the ATP binding site. The interval 23-28 (GAEGFG) is involved in allosteric activation by GTP. A UMP-binding site is contributed by glycine 57. 2 residues coordinate ATP: glycine 58 and arginine 62. UMP is bound by residues aspartate 77 and 138–145 (TGNPLFTT). The ATP site is built by threonine 165, phenylalanine 171, and aspartate 174.

This sequence belongs to the UMP kinase family. As to quaternary structure, homohexamer.

It localises to the cytoplasm. It carries out the reaction UMP + ATP = UDP + ADP. It participates in pyrimidine metabolism; CTP biosynthesis via de novo pathway; UDP from UMP (UMPK route): step 1/1. With respect to regulation, allosterically activated by GTP. Inhibited by UTP. Catalyzes the reversible phosphorylation of UMP to UDP. The sequence is that of Uridylate kinase from Blochmanniella pennsylvanica (strain BPEN).